A 138-amino-acid polypeptide reads, in one-letter code: MEDRQKLEQMVTEINQLQQQGETITQQIEQLNQSLADITTAQEAVKGIKNATGKQTLVPIGAGCFIETELKSEDIIVGVGSDVAIKRSREETEKTLQTDKEEVQKLIGSLTEQLQKINEYIAQKRPEAERLMKETGVQ.

Belongs to the prefoldin subunit alpha family. In terms of assembly, heterohexamer of two alpha and four beta subunits.

Its subcellular location is the cytoplasm. In terms of biological role, molecular chaperone capable of stabilizing a range of proteins. Seems to fulfill an ATP-independent, HSP70-like function in archaeal de novo protein folding. The chain is Prefoldin subunit alpha from Methanosphaera stadtmanae (strain ATCC 43021 / DSM 3091 / JCM 11832 / MCB-3).